The chain runs to 518 residues: Glycerophosphoinositol transporter 1 (518 aa).

The Cytoplasmic portion of the chain corresponds to 1-44 (MEDKDITSVNEKEVNENTNPRIIKYDAERRATRTETSKKDKWKN). Residues 45–65 (IVTIIASGFALISDGYVNGSM) traverse the membrane as a helical segment. Residues 66-91 (SMLNKVFVMEYGKKNYSSKVSTRVSN) are Extracellular-facing. Residue Asn-80 is glycosylated (N-linked (GlcNAc...) asparagine). A helical transmembrane segment spans residues 92 to 112 (AALVGIIFGQFFMGIAADYYS). At 113–114 (RK) the chain is on the cytoplasmic side. The helical transmembrane segment at 115 to 136 (SCILVATAILVIGSALCAASHG) threads the bilayer. Over 137–138 (TT) the chain is Extracellular. Residues 139–159 (VPGMFWMLTVMRGLVGIGVGA) traverse the membrane as a helical segment. At 160–184 (EYPTSTLSANESANEYTTTKRGGIL) the chain is on the cytoplasmic side. The chain crosses the membrane as a helical span at residues 185-205 (VMVTNLPLAFGGPFATIIFLI). Residues 206–216 (VYKICSGTKHL) lie on the Extracellular side of the membrane. A helical transmembrane segment spans residues 217-237 (EAIWRTVFAIGCFWPLSVFYF). At 238–268 (RWKTATTEVYEKGRIKRNIPYFLALKFYWKR) the chain is on the cytoplasmic side. Residues 269–289 (LLGTCGTWFMYDFVTFPNGIF) form a helical membrane-spanning segment. At 290–306 (SSTIISSVIKDQNDLVK) the chain is on the extracellular side. The chain crosses the membrane as a helical span at residues 307 to 327 (VAEWNLLLGVLAVLGVPIGAY). Over 328–335 (LSDRIGRK) the chain is Cytoplasmic. Residues 336–356 (YTLMFGFSGYIIFGLIIGCAY) traverse the membrane as a helical segment. The Extracellular segment spans residues 357–360 (DQLK). The helical transmembrane segment at 361–381 (KITPLFIIFYAFMNMLGNAGP) threads the bilayer. The Cytoplasmic portion of the chain corresponds to 382 to 399 (GDMLGVISSEASATAVRG). The chain crosses the membrane as a helical span at residues 400 to 420 (VFYGLSAVTGKIGSVVGVECF). Topologically, residues 421-430 (QPIRDNLGAR) are extracellular. A helical membrane pass occupies residues 431-451 (WTFIIAAICGLIGIIITYFFV). The Cytoplasmic portion of the chain corresponds to 452–518 (PHSLESDLMK…IISVRQVDQS (67 aa)).

Belongs to the major facilitator superfamily. Sugar transporter (TC 2.A.1.1) family.

The protein resides in the cell membrane. The catalysed reaction is sn-glycerol 3-phosphocholine(out) = sn-glycerol 3-phosphocholine(in). It carries out the reaction sn-glycero-3-phospho-1D-myo-inositol(out) = sn-glycero-3-phospho-1D-myo-inositol(in). Its function is as follows. Glycerophosphodiester transporter that mediates uptake of both glycerophosphoinositol (GroPIns) and glycerophosphocholine (GroPCho) as sources of the nutrients inositol and phosphate. In Saccharomyces cerevisiae (strain ATCC 204508 / S288c) (Baker's yeast), this protein is Glycerophosphoinositol transporter 1.